The sequence spans 441 residues: Signal recognition particle 54 kDa protein (441 aa).

GTP is bound by residues 103–110, 184–188, and 244–247; these read GVQGSGKT, DTAGR, and TKMD.

Belongs to the GTP-binding SRP family. SRP54 subfamily. In terms of assembly, part of the signal recognition particle protein translocation system, which is composed of SRP and FtsY. Archaeal SRP consists of a 7S RNA molecule of 300 nucleotides and two protein subunits: SRP54 and SRP19.

Its subcellular location is the cytoplasm. The catalysed reaction is GTP + H2O = GDP + phosphate + H(+). Its function is as follows. Involved in targeting and insertion of nascent membrane proteins into the cytoplasmic membrane. Binds to the hydrophobic signal sequence of the ribosome-nascent chain (RNC) as it emerges from the ribosomes. The SRP-RNC complex is then targeted to the cytoplasmic membrane where it interacts with the SRP receptor FtsY. This chain is Signal recognition particle 54 kDa protein, found in Aeropyrum pernix (strain ATCC 700893 / DSM 11879 / JCM 9820 / NBRC 100138 / K1).